Reading from the N-terminus, the 493-residue chain is UDP-N-acetylmuramoyl-L-alanyl-D-glutamate--2,6-diaminopimelate ligase (493 aa).

Residue Ser31 participates in UDP-N-acetyl-alpha-D-muramoyl-L-alanyl-D-glutamate binding. 111 to 117 lines the ATP pocket; the sequence is GTNGKTT. Residues Asn152, 153-154, Ser180, and Arg188 each bind UDP-N-acetyl-alpha-D-muramoyl-L-alanyl-D-glutamate; that span reads TT. Lys220 carries the N6-carboxylysine modification. Meso-2,6-diaminopimelate-binding positions include Arg386, 410-413, Gly462, and Glu466; that span reads DNPR. Positions 410-413 match the Meso-diaminopimelate recognition motif motif; the sequence is DNPR.

It belongs to the MurCDEF family. MurE subfamily. Requires Mg(2+) as cofactor. Carboxylation is probably crucial for Mg(2+) binding and, consequently, for the gamma-phosphate positioning of ATP.

The protein localises to the cytoplasm. The catalysed reaction is UDP-N-acetyl-alpha-D-muramoyl-L-alanyl-D-glutamate + meso-2,6-diaminopimelate + ATP = UDP-N-acetyl-alpha-D-muramoyl-L-alanyl-gamma-D-glutamyl-meso-2,6-diaminopimelate + ADP + phosphate + H(+). The protein operates within cell wall biogenesis; peptidoglycan biosynthesis. Its function is as follows. Catalyzes the addition of meso-diaminopimelic acid to the nucleotide precursor UDP-N-acetylmuramoyl-L-alanyl-D-glutamate (UMAG) in the biosynthesis of bacterial cell-wall peptidoglycan. This chain is UDP-N-acetylmuramoyl-L-alanyl-D-glutamate--2,6-diaminopimelate ligase (murE1), found in Oceanobacillus iheyensis (strain DSM 14371 / CIP 107618 / JCM 11309 / KCTC 3954 / HTE831).